A 276-amino-acid polypeptide reads, in one-letter code: Secretagogin (276 aa).

6 consecutive EF-hand domains span residues 12–47 (LDAA…MLMK), 58–93 (NLHK…EDEN), 105–140 (DSSV…LFLH), 149–184 (KLEE…QENF), 197–232 (ERKR…MMEL), and 240–276 (VDLD…KINP). Aspartate 25, aspartate 27, tyrosine 31, glutamate 36, aspartate 71, serine 73, aspartate 75, arginine 77, glutamate 82, aspartate 118, aspartate 120, serine 122, glutamate 129, aspartate 162, asparagine 164, aspartate 166, arginine 168, aspartate 173, aspartate 210, serine 212, threonine 214, glutamate 221, aspartate 254, asparagine 256, aspartate 258, lysine 260, and glutamate 265 together coordinate Ca(2+).

In terms of tissue distribution, expressed at high levels in the pancreatic islets of Langerhans and to a much lesser extent in the gastrointestinal tract (stomach, small intestine and colon), the adrenal medulla and cortex and the thyroid C-cells. In the brain, the expression is restricted to distinct subtypes of neurons with highest expression in the molecular layer of the cerebellum (stellate and basket cells), in the anterior part of the pituitary gland, in the thalamus, in the hypothalamus and in a subgroup of neocortical neurons.

It is found in the cytoplasm. The protein localises to the secreted. It localises to the cytoplasmic vesicle. Its subcellular location is the secretory vesicle membrane. This Homo sapiens (Human) protein is Secretagogin (SCGN).